The chain runs to 460 residues: Metal cation symporter ZIP8 (460 aa).

The first 22 residues, 1-22, serve as a signal peptide directing secretion; the sequence is MAPGRAVAGLLLLAAAGLGGVA. The Extracellular segment spans residues 23–132; that stretch reads EGPGLAFSED…PSHSEVWGYG (110 aa). N-linked (GlcNAc...) asparagine glycosylation is found at Asn40 and Asn88. A helical membrane pass occupies residues 133 to 153; the sequence is FLSVTIINLASLLGLILTPLI. The Cytoplasmic portion of the chain corresponds to 154 to 160; the sequence is KKSYFPK. A helical transmembrane segment spans residues 161-181; that stretch reads ILTFFVGLAIGTLFSNAIFQL. At 182 to 191 the chain is on the extracellular side; sequence IPEAFGFDPK. A helical transmembrane segment spans residues 192-212; the sequence is VDSYVEKAVAVFGGFYLLFFF. The Cytoplasmic segment spans residues 213 to 365; the sequence is ERMLKMLLKT…LNAGMSTRQA (153 aa). An XEXPHE-motif motif is present at residues 343-348; it reads EEFPHE. The helical transmembrane segment at 366–386 threads the bilayer; that stretch reads LLFNFLSACSCYVGLAFGILV. Topologically, residues 387–388 are extracellular; that stretch reads GN. Residues 389–409 traverse the membrane as a helical segment; it reads NFAPNIIFALAGGMFLYISLA. At 410–429 the chain is on the cytoplasmic side; it reads DMFPEMNDMLREKVTGRKTD. The helical transmembrane segment at 430-450 threads the bilayer; it reads FTFFMIQNAGMLTGFTAILLI. Residues 451–460 are Extracellular-facing; sequence TLYAGEIELE.

Belongs to the ZIP transporter (TC 2.A.5) family. In terms of assembly, homodimer. In terms of processing, N-glycosylated. N-glycosylation is not required for proper iron and zinc transport. As to expression, ubiquitously expressed. Expressed in thymus, placenta, lung, liver, pancreas, salivary gland and, to a lower extent, in spleen, testis, ovary, small intestine, colon, leukocyte, heart. Highest expression is observed in pancreas. Expressed by macrophages (at protein level). Expressed by microvascular capillary endothelial cells that constitute the blood-brain barrier (at protein level).

It is found in the cell membrane. Its subcellular location is the lysosome membrane. The protein localises to the apical cell membrane. The protein resides in the basolateral cell membrane. The enzyme catalyses Zn(2+)(out) + 2 hydrogencarbonate(out) = Zn(2+)(in) + 2 hydrogencarbonate(in). It carries out the reaction selenite(out) + Zn(2+)(out) + hydrogencarbonate(out) = selenite(in) + Zn(2+)(in) + hydrogencarbonate(in). It catalyses the reaction Mn(2+)(out) + 2 hydrogencarbonate(out) = Mn(2+)(in) + 2 hydrogencarbonate(in). The catalysed reaction is Fe(2+)(out) + 2 hydrogencarbonate(out) = Fe(2+)(in) + 2 hydrogencarbonate(in). The enzyme catalyses Cd(2+)(out) + 2 hydrogencarbonate(out) = Cd(2+)(in) + 2 hydrogencarbonate(in). It carries out the reaction Co(2+)(out) + 2 hydrogencarbonate(out) = Co(2+)(in) + 2 hydrogencarbonate(in). In terms of biological role, electroneutral divalent metal cation:bicarbonate symporter of the plasma membrane mediating the cellular uptake of zinc and manganese, two divalent metal cations important for development, tissue homeostasis and immunity. Transports an electroneutral complex composed of a divalent metal cation and two bicarbonate anions or alternatively a bicarbonate and a selenite anion. Thereby, it also contributes to the cellular uptake of selenium, an essential trace metal and micronutrient. Also imports cadmium a non-essential metal which is cytotoxic and carcinogenic. May also transport iron and cobalt through membranes. Through zinc import, indirectly regulates the metal-dependent transcription factor MTF1 and the expression of some metalloproteases involved in cartilage catabolism and also probably heart development. Also indirectly regulates the expression of proteins involved in cell morphology and cytoskeleton organization. Indirectly controls innate immune function and inflammatory response by regulating zinc cellular uptake which in turn modulates the expression of genes specific of these processes. Protects, for instance, cells from injury and death at the onset of inflammation. By regulating zinc influx into monocytes also directly modulates their adhesion to endothelial cells and arteries. Reclaims manganese from the bile at the apical membrane of hepatocytes, thereby regulating the activity of the manganese-dependent enzymes through the systemic levels of the nutrient. Also participates in manganese reabsorption in the proximal tubule of the kidney. By mediating the extracellular uptake of manganese by cells of the blood-brain barrier, may also play a role in the transport of the micronutrient to the brain. With manganese cellular uptake also participates in mitochondrial proper function. Finally, also probably functions intracellularly, translocating zinc from lysosome to cytosol to indirectly enhance the expression of specific genes during TCR-mediated T cell activation. The sequence is that of Metal cation symporter ZIP8 from Homo sapiens (Human).